Here is a 430-residue protein sequence, read N- to C-terminus: Probable sugar isomerase R00627 (430 aa).

His-257, Asp-289, and Asp-291 together coordinate Mn(2+).

This sequence belongs to the rhamnose isomerase family. Requires Mn(2+) as cofactor.

In Rhizobium meliloti (strain 1021) (Ensifer meliloti), this protein is Probable sugar isomerase R00627.